The following is a 152-amino-acid chain: Protein SprT-like (152 aa).

In terms of domain architecture, SprT-like spans 7–148; sequence QRLVEEVSLQ…GKCKGKLNLI (142 aa). Zn(2+) is bound at residue H67. The active site involves E68. H71 lines the Zn(2+) pocket.

This sequence belongs to the SprT family. Zn(2+) is required as a cofactor.

Its subcellular location is the cytoplasm. In Bacillus cereus (strain 03BB102), this protein is Protein SprT-like.